The primary structure comprises 219 residues: Oligoribonuclease (219 aa).

An Exonuclease domain is found at 30-193; the sequence is LVWLDMEMTG…ADIVESIEEL (164 aa). The active site involves Tyr-151.

This sequence belongs to the oligoribonuclease family.

The protein resides in the cytoplasm. Its function is as follows. 3'-to-5' exoribonuclease specific for small oligoribonucleotides. This Ralstonia nicotianae (strain ATCC BAA-1114 / GMI1000) (Ralstonia solanacearum) protein is Oligoribonuclease.